The following is a 78-amino-acid chain: DNA-directed RNA polymerase subunit omega (78 aa).

It belongs to the RNA polymerase subunit omega family. As to quaternary structure, in cyanobacteria the RNAP catalytic core is composed of 2 alpha, 1 beta, 1 beta', 1 gamma and 1 omega subunit. When a sigma factor is associated with the core the holoenzyme is formed, which can initiate transcription.

It catalyses the reaction RNA(n) + a ribonucleoside 5'-triphosphate = RNA(n+1) + diphosphate. Its function is as follows. Promotes RNA polymerase assembly. Latches the N- and C-terminal regions of the beta' subunit thereby facilitating its interaction with the beta and alpha subunits. The polypeptide is DNA-directed RNA polymerase subunit omega (Prochlorococcus marinus (strain AS9601)).